Reading from the N-terminus, the 59-residue chain is Embryonic testis differentiation protein (59 aa).

Positions 1-28 (MDEKNPEAVPRPPEQNTELVPPKKSKSK) are disordered.

As to expression, specifically expressed in testis.

The sequence is that of Embryonic testis differentiation protein from Mus musculus (Mouse).